The primary structure comprises 334 residues: Beta-ketoacyl-[acyl-carrier-protein] synthase III (334 aa).

Active-site residues include Cys-114 and His-260. The segment at 261–265 (QANLR) is ACP-binding. The active site involves Asn-290.

Belongs to the thiolase-like superfamily. FabH family. As to quaternary structure, homodimer.

The protein resides in the cytoplasm. The catalysed reaction is malonyl-[ACP] + acetyl-CoA + H(+) = 3-oxobutanoyl-[ACP] + CO2 + CoA. Its pathway is lipid metabolism; fatty acid biosynthesis. Functionally, catalyzes the condensation reaction of fatty acid synthesis by the addition to an acyl acceptor of two carbons from malonyl-ACP. Catalyzes the first condensation reaction which initiates fatty acid synthesis and may therefore play a role in governing the total rate of fatty acid production. Possesses both acetoacetyl-ACP synthase and acetyl transacylase activities. Its substrate specificity determines the biosynthesis of branched-chain and/or straight-chain of fatty acids. The chain is Beta-ketoacyl-[acyl-carrier-protein] synthase III from Clostridium tetani (strain Massachusetts / E88).